The chain runs to 157 residues: S-ribosylhomocysteine lyase (157 aa).

Fe cation-binding residues include His54, His58, and Cys126.

The protein belongs to the LuxS family. As to quaternary structure, homodimer. Requires Fe cation as cofactor.

The enzyme catalyses S-(5-deoxy-D-ribos-5-yl)-L-homocysteine = (S)-4,5-dihydroxypentane-2,3-dione + L-homocysteine. In terms of biological role, involved in the synthesis of autoinducer 2 (AI-2) which is secreted by bacteria and is used to communicate both the cell density and the metabolic potential of the environment. The regulation of gene expression in response to changes in cell density is called quorum sensing. Catalyzes the transformation of S-ribosylhomocysteine (RHC) to homocysteine (HC) and 4,5-dihydroxy-2,3-pentadione (DPD). The polypeptide is S-ribosylhomocysteine lyase (Bacillus anthracis (strain A0248)).